The sequence spans 538 residues: D-alanyl-D-alanine carboxypeptidase (538 aa).

The disordered stretch occupies residues 1–21 (MKQSSPEPLRPRRTGGRGGAR). An N-terminal signal peptide occupies residues 1–49 (MKQSSPEPLRPRRTGGRGGARRAAALVTIPLLPMTLLGASPALADASGA). S98 functions as the Acyl-ester intermediate in the catalytic mechanism. K101 (proton acceptor) is an active-site residue. Positions 146–319 (TLSAEDLDAM…KGDVGLGGVP (174 aa)) are absent in class-A beta-lactamases. The active site involves S347. K459 provides a ligand contact to substrate. A propeptide spans 516 to 538 (GARMMRGPVQGSGELECSWVQAC) (removed in mature form).

The protein belongs to the peptidase S13 family.

It is found in the secreted. It carries out the reaction Preferential cleavage: (Ac)2-L-Lys-D-Ala-|-D-Ala. Also transpeptidation of peptidyl-alanyl moieties that are N-acyl substituents of D-alanine.. It participates in cell wall biogenesis; peptidoglycan biosynthesis. Its activity is regulated as follows. Inhibited by benzylpenicillin, cephaloridine, ampicillin and cetiofur. Functionally, removes C-terminal D-alanyl residues from sugar-peptide cell wall precursors. This is D-alanyl-D-alanine carboxypeptidase (dac) from Actinomadura sp. (strain R39).